A 247-amino-acid chain; its full sequence is Germin-like protein 9-1 (247 aa).

The signal sequence occupies residues 1–25 (MMMSSRSSVSLGVLLLLAVILSAGA). Positions 53-201 (KNLVTGNSGD…SMHTDQATVD (149 aa)) constitute a Cupin type-1 domain. Positions 100, 102, and 107 each coordinate Mn(2+). N126 is a glycosylation site (N-linked (GlcNAc...) asparagine). A Mn(2+)-binding site is contributed by H148. N-linked (GlcNAc...) asparagine glycosylation is present at N153.

The protein belongs to the germin family. In terms of assembly, oligomer (believed to be a pentamer but probably hexamer).

The protein resides in the secreted. It is found in the extracellular space. Its subcellular location is the apoplast. May play a role in plant defense. Probably has no oxalate oxidase activity even if the active site is conserved. The sequence is that of Germin-like protein 9-1 from Oryza sativa subsp. japonica (Rice).